The following is a 1408-amino-acid chain: DNA-directed RNA polymerase subunit beta' (1408 aa).

Zn(2+) contacts are provided by Cys70, Cys72, Cys85, and Cys88. Positions 460, 462, and 464 each coordinate Mg(2+). Cys814, Cys888, Cys895, and Cys898 together coordinate Zn(2+).

Belongs to the RNA polymerase beta' chain family. In terms of assembly, the RNAP catalytic core consists of 2 alpha, 1 beta, 1 beta' and 1 omega subunit. When a sigma factor is associated with the core the holoenzyme is formed, which can initiate transcription. The cofactor is Mg(2+). Requires Zn(2+) as cofactor.

It catalyses the reaction RNA(n) + a ribonucleoside 5'-triphosphate = RNA(n+1) + diphosphate. In terms of biological role, DNA-dependent RNA polymerase catalyzes the transcription of DNA into RNA using the four ribonucleoside triphosphates as substrates. This chain is DNA-directed RNA polymerase subunit beta', found in Serratia proteamaculans (strain 568).